Consider the following 440-residue polypeptide: D-serine dehydratase (440 aa).

Lys-116 carries the N6-(pyridoxal phosphate)lysine modification.

Belongs to the serine/threonine dehydratase family. DsdA subfamily. As to quaternary structure, monomer. It depends on pyridoxal 5'-phosphate as a cofactor.

It catalyses the reaction D-serine = pyruvate + NH4(+). The protein is D-serine dehydratase of Salmonella arizonae (strain ATCC BAA-731 / CDC346-86 / RSK2980).